Consider the following 420-residue polypeptide: Amino acid decarboxylase lolD1 (420 aa).

An N6-(pyridoxal phosphate)lysine modification is found at K62. Pyridoxal 5'-phosphate is bound by residues S194, G231, and 266–269 (EPGT). 315–316 (IV) lines the substrate pocket. C351 (proton donor; shared with dimeric partner) is an active-site residue. C351 is subject to S-nitrosocysteine. D352 is a substrate binding site. Position 381 (Y381) interacts with pyridoxal 5'-phosphate.

This sequence belongs to the Orn/Lys/Arg decarboxylase class-II family. Homodimer. It depends on pyridoxal 5'-phosphate as a cofactor.

The protein operates within alkaloid biosynthesis. In terms of biological role, amino acid decarboxylase; part of the gene cluster that mediates the biosynthesis of loline alkaloids, potent insecticidal agents composed of a pyrrolizidine ring system and an uncommon ether bridge linking carbons 2 and 7. Lolines are structurally differentiated by the various modifications of the L-amino group and include norloline, loline, N-methylloline, N-acetylloline, N-acetylnorloline, and N-formylloline. The first committed step is the condensation of O-acetyl-L-homoserine (derived from L-aspartic acid) and L-proline, probably catalyzed by the gamma-type pyridoxal 5'-phosphate(PLP)-dependent enzyme lolC, to give the diamino diacid, NACPP. Ensuing cyclization, decarboxylation, and acetylation steps yield 1-exo-acetamidopyrrolizidine (AcAP). LolO is required for installation of the ether bridge upon the pathway intermediate, 1-exo-acetamidopyrrolizidine (AcAP). In sequential 2-oxoglutarate- and O(2)-consuming steps, lolO removes hydrogens from C2 and C7 of AcAP to form both carbon-oxygen bonds in N-acetylnorloline (NANL), the precursor to all other lolines. The enzymes lolD, lolE, lolF and lolT have also been proposed to be involved in the ether-bridge installation. Further processing of the exocyclic moiety of NANL by fungal N-acetamidase (LolN), methyltransferase (LolM), and cytochrome P450 (LolP) enzymes, with occasional involvement of a plant acetyltransferase, generates the other known lolines. LolN transforms NANL to norlonine which is monomethylated and dimethylated to respectively lonine and N-methyllonine (NML) by lolM. LolP catalyzes hydroxylation of the methyl group in N-methylloline (NML) and further oxygenation to N-formylloline (NFL). A plant acetyltransferase is responsible for the acetylation of loline to form N-acetylloline (NAL). LolA might interact with aspartate kinase to prevent feedback inhibition of its activity by these end products and thereby promote production of L-homoserine from L-aspartate. This is Amino acid decarboxylase lolD1 from Epichloe uncinata (Endophyte fungus).